The primary structure comprises 119 residues: Ribonuclease P protein component (119 aa).

It belongs to the RnpA family. Consists of a catalytic RNA component (M1 or rnpB) and a protein subunit.

The catalysed reaction is Endonucleolytic cleavage of RNA, removing 5'-extranucleotides from tRNA precursor.. Functionally, RNaseP catalyzes the removal of the 5'-leader sequence from pre-tRNA to produce the mature 5'-terminus. It can also cleave other RNA substrates such as 4.5S RNA. The protein component plays an auxiliary but essential role in vivo by binding to the 5'-leader sequence and broadening the substrate specificity of the ribozyme. This Yersinia pseudotuberculosis serotype O:1b (strain IP 31758) protein is Ribonuclease P protein component.